We begin with the raw amino-acid sequence, 456 residues long: Adenylosuccinate lyase (456 aa).

N(6)-(1,2-dicarboxyethyl)-AMP is bound by residues Arg-15–Tyr-16, Asn-90–Asp-92, and Thr-122–Ser-123. His-171 functions as the Proton donor/acceptor in the catalytic mechanism. Gln-247 contacts N(6)-(1,2-dicarboxyethyl)-AMP. The active-site Proton donor/acceptor is the Ser-295. N(6)-(1,2-dicarboxyethyl)-AMP-binding positions include Ser-296, Lys-301–Asn-303, Asn-309, Arg-335, and Ser-340–Arg-344.

The protein belongs to the lyase 1 family. Adenylosuccinate lyase subfamily. In terms of assembly, homotetramer. Residues from neighboring subunits contribute catalytic and substrate-binding residues to each active site.

It catalyses the reaction N(6)-(1,2-dicarboxyethyl)-AMP = fumarate + AMP. The enzyme catalyses (2S)-2-[5-amino-1-(5-phospho-beta-D-ribosyl)imidazole-4-carboxamido]succinate = 5-amino-1-(5-phospho-beta-D-ribosyl)imidazole-4-carboxamide + fumarate. Its pathway is purine metabolism; AMP biosynthesis via de novo pathway; AMP from IMP: step 2/2. It functions in the pathway purine metabolism; IMP biosynthesis via de novo pathway; 5-amino-1-(5-phospho-D-ribosyl)imidazole-4-carboxamide from 5-amino-1-(5-phospho-D-ribosyl)imidazole-4-carboxylate: step 2/2. Catalyzes two reactions in de novo purine nucleotide biosynthesis. Catalyzes the breakdown of 5-aminoimidazole- (N-succinylocarboxamide) ribotide (SAICAR or 2-[5-amino-1-(5-phospho-beta-D-ribosyl)imidazole-4-carboxamido]succinate) to 5-aminoimidazole-4-carboxamide ribotide (AICAR or 5-amino-1-(5-phospho-beta-D-ribosyl)imidazole-4-carboxamide) and fumarate, and of adenylosuccinate (ADS or N(6)-(1,2-dicarboxyethyl)-AMP) to adenosine monophosphate (AMP) and fumarate. In Legionella pneumophila (strain Corby), this protein is Adenylosuccinate lyase (purB).